We begin with the raw amino-acid sequence, 182 residues long: Lipoprotein signal peptidase (182 aa).

The next 3 helical transmembrane spans lie at valine 12–tryptophan 32, alanine 68–valine 88, and valine 91–isoleucine 111. Residues aspartate 127 and aspartate 140 contribute to the active site. The chain crosses the membrane as a helical span at residues valine 135 to leucine 155.

It belongs to the peptidase A8 family.

Its subcellular location is the cell membrane. The catalysed reaction is Release of signal peptides from bacterial membrane prolipoproteins. Hydrolyzes -Xaa-Yaa-Zaa-|-(S,diacylglyceryl)Cys-, in which Xaa is hydrophobic (preferably Leu), and Yaa (Ala or Ser) and Zaa (Gly or Ala) have small, neutral side chains.. It participates in protein modification; lipoprotein biosynthesis (signal peptide cleavage). Its function is as follows. This protein specifically catalyzes the removal of signal peptides from prolipoproteins. The protein is Lipoprotein signal peptidase of Bifidobacterium longum (strain DJO10A).